Reading from the N-terminus, the 361-residue chain is DNA-(apurinic or apyrimidinic site) endonuclease (361 aa).

Residues 1-90 (MTSRTKKLKM…TNKTTASVSI (90 aa)) form a disordered region. The span at 25 to 39 (TSEEEKEEVEEEEEE) shows a compositional bias: acidic residues. Positions 41–44 (KKRK) match the Nuclear localization signal motif. A compositionally biased stretch (basic residues) spans 43 to 64 (RKLVKKTPAKKAPAKKAAAKKK). Over residues 68–80 (EDEDEEEKEEEEE) the composition is skewed to acidic residues. Glutamate 139 contributes to the Mg(2+) binding site. Residue tyrosine 211 is part of the active site. The Mg(2+) site is built by aspartate 252, asparagine 254, and aspartate 350. Catalysis depends on aspartate 252, which acts as the Proton donor/acceptor.

It belongs to the DNA repair enzymes AP/ExoA family. Mg(2+) serves as cofactor. Requires Mn(2+) as cofactor.

It is found in the nucleus. The sequence is that of DNA-(apurinic or apyrimidinic site) endonuclease (apeA) from Dictyostelium discoideum (Social amoeba).